Reading from the N-terminus, the 119-residue chain is uncharacterized protein (119 aa).

C9 and C12 form a disulfide bridge.

The protein belongs to the ArsC family.

This is an uncharacterized protein from Streptomyces viridochromogenes.